Here is a 258-residue protein sequence, read N- to C-terminus: Apolipoprotein A-I (258 aa).

An N-terminal signal peptide occupies residues 1–18; sequence MKFLVLALTILLAAGTQA. The 3 X approximate tandem repeats stretch occupies residues 32–63; that stretch reads VKAALNMYIAQVKLTAQRSIDLLDDTEYKEYK. 2 tandem repeats follow at residues 64–85 and 86–106. Positions 64–258 are 10 X approximate tandem repeats; sequence MQLSQSLDNL…WLSTRPSARP (195 aa). The stretch at 107–117 is one 3; half-length repeat; the sequence is KDVEDVRTQLE. 7 tandem repeats follow at residues 118–139, 140–161, 162–183, 184–205, 206–227, 228–238, and 239–258. The segment at 233-258 is disordered; that stretch reads FKARWAPPPRRPSKSSWLSTRPSARP. A compositionally biased stretch (polar residues) spans 246–258; that stretch reads KSSWLSTRPSARP.

The protein belongs to the apolipoprotein A1/A4/E family. In terms of tissue distribution, major protein of plasma HDL, also found in chylomicrons. Expressed in liver, intestine and muscle.

It is found in the secreted. Functionally, participates in the reverse transport of cholesterol from tissues to the liver for excretion by promoting cholesterol efflux from tissues and by acting as a cofactor for the lecithin cholesterol acyltransferase (LCAT). This chain is Apolipoprotein A-I (apoa1), found in Salmo salar (Atlantic salmon).